Consider the following 652-residue polypeptide: Inactive leucine-rich repeat receptor-like serine/threonine-protein kinase At1g60630 (652 aa).

The N-terminal stretch at 1-23 (MISSSSCMFFLVFAFFLISPVRS) is a signal peptide. Over 24-256 (SDVEALLSLK…SRTKLIGIIS (233 aa)) the chain is Extracellular. 6 LRR repeats span residues 64–84 (SKLV…SLNQ), 85–108 (LDQL…LSGL), 109–132 (VNLK…LTSL), 134–156 (RLKT…LLRL), 158–178 (RLYT…PLNQ), and 179–203 (ATLR…ALNR). Asn72, Asn104, and Asn120 each carry an N-linked (GlcNAc...) asparagine glycan. N-linked (GlcNAc...) asparagine glycosylation is found at Asn185, Asn205, and Asn225. The helical transmembrane segment at 257 to 277 (GSICGGILILLLTFLLICLLW) threads the bilayer. The Cytoplasmic portion of the chain corresponds to 278 to 652 (RRKRSKSKRE…SLPREDHMSI (375 aa)). A disordered region spans residues 286–321 (REERRSKRVAESKEAKTAETEEGTSDQKNKRFSWEK). The Protein kinase domain occupies 350-624 (KASAETLGRG…VKDARAEAAL (275 aa)). Ser352 is modified (phosphoserine). Residues 356–364 (LGRGTLGST) and Lys378 contribute to the ATP site. 2 positions are modified to phosphoserine: Ser430 and Ser433. Phosphothreonine is present on Thr509. Residues 630-652 (SDHSPGRWSDTIQSLPREDHMSI) are disordered.

The protein belongs to the protein kinase superfamily. Ser/Thr protein kinase family.

Its subcellular location is the cell membrane. In Arabidopsis thaliana (Mouse-ear cress), this protein is Inactive leucine-rich repeat receptor-like serine/threonine-protein kinase At1g60630.